Reading from the N-terminus, the 275-residue chain is Rhamnulose-1-phosphate aldolase (275 aa).

E117 is a catalytic residue. Residues H141, H143, and H212 each contribute to the Zn(2+) site.

This sequence belongs to the aldolase class II family. RhaD subfamily. As to quaternary structure, homotetramer. The cofactor is Zn(2+).

Its subcellular location is the cytoplasm. It carries out the reaction L-rhamnulose 1-phosphate = (S)-lactaldehyde + dihydroxyacetone phosphate. It participates in carbohydrate degradation; L-rhamnose degradation; glycerone phosphate from L-rhamnose: step 3/3. Functionally, catalyzes the reversible cleavage of L-rhamnulose-1-phosphate to dihydroxyacetone phosphate (DHAP) and L-lactaldehyde. The protein is Rhamnulose-1-phosphate aldolase of Salmonella dublin (strain CT_02021853).